The chain runs to 279 residues: MQVLWKKFQKKLIDANLAECGIEIGVPNVGYNYTVFQKSVLHIVTQGEGTFSYAGETYHLTAGDIFLLERGMEVEYKPSFSNPWTYYWVGMNGKQILNYLSRCSIVDSHVILGQDTTDIKNIIQLICKLSQSIESNNSNDILIMQYLYQLVYTLQEKFPKIFSVQVDIVNEDIQHAVDFINTNYQKHITVEDVAKSVNITRSHLYKLFKKNLGCSPKEYLTYIRMYHASQLLIHTSTLISDISRQVGYKDPLLFSKNFTKHFEISASEYRHHFSINNKQ.

The HTH araC/xylS-type domain occupies 174 to 272; sequence QHAVDFINTN…EISASEYRHH (99 aa). DNA-binding regions (H-T-H motif) lie at residues 191-212 and 239-262; these read EDVA…KKNL and ISDI…TKHF.

Functionally, transcriptional regulator of the lacPH genes for lactose utilization. This Staphylococcus xylosus protein is Lactose operon transcription activator (lacR).